The sequence spans 184 residues: Glucosamine 6-phosphate N-acetyltransferase (184 aa).

Positions 39-184 (LVLRPLCTAD…ENYMCRRFLK (146 aa)) constitute an N-acetyltransferase domain. Substrate is bound by residues Thr61, 108-111 (KFIH), and 120-122 (EDV). 130 to 135 (GKQLGK) serves as a coordination point for acetyl-CoA. Residue 151-152 (YK) coordinates substrate. An acetyl-CoA-binding site is contributed by 165-167 (YKK). The substrate site is built by Glu175 and Arg181.

The protein belongs to the acetyltransferase family. GNA1 subfamily. In terms of assembly, homodimer. As to expression, ubiquitous. Shows a strong differential expression pattern in adult hematopoietic precursor cells.

It localises to the golgi apparatus membrane. The protein resides in the endosome membrane. It carries out the reaction D-glucosamine 6-phosphate + acetyl-CoA = N-acetyl-D-glucosamine 6-phosphate + CoA + H(+). It functions in the pathway nucleotide-sugar biosynthesis; UDP-N-acetyl-alpha-D-glucosamine biosynthesis; N-acetyl-alpha-D-glucosamine 1-phosphate from alpha-D-glucosamine 6-phosphate (route I): step 1/2. This Mus musculus (Mouse) protein is Glucosamine 6-phosphate N-acetyltransferase (Gnpnat1).